A 254-amino-acid polypeptide reads, in one-letter code: Imidazole glycerol phosphate synthase subunit HisF (254 aa).

Catalysis depends on residues Asp-11 and Asp-130.

Belongs to the HisA/HisF family. Heterodimer of HisH and HisF.

The protein resides in the cytoplasm. It carries out the reaction 5-[(5-phospho-1-deoxy-D-ribulos-1-ylimino)methylamino]-1-(5-phospho-beta-D-ribosyl)imidazole-4-carboxamide + L-glutamine = D-erythro-1-(imidazol-4-yl)glycerol 3-phosphate + 5-amino-1-(5-phospho-beta-D-ribosyl)imidazole-4-carboxamide + L-glutamate + H(+). It participates in amino-acid biosynthesis; L-histidine biosynthesis; L-histidine from 5-phospho-alpha-D-ribose 1-diphosphate: step 5/9. Its function is as follows. IGPS catalyzes the conversion of PRFAR and glutamine to IGP, AICAR and glutamate. The HisF subunit catalyzes the cyclization activity that produces IGP and AICAR from PRFAR using the ammonia provided by the HisH subunit. The protein is Imidazole glycerol phosphate synthase subunit HisF of Trichlorobacter lovleyi (strain ATCC BAA-1151 / DSM 17278 / SZ) (Geobacter lovleyi).